The chain runs to 291 residues: Basic helix-loop-helix protein 80 (291 aa).

The tract at residues 65-120 (SAVLDTSPSVDRKRKAAEDSAHSKDSCKDGKSRRGKKASKEVEEKSTTEDEPPKGY) is disordered. Residues 80–117 (AAEDSAHSKDSCKDGKSRRGKKASKEVEEKSTTEDEPP) are compositionally biased toward basic and acidic residues. Residues 125–132 (ARRGQATD) carry the Nuclear localization signal motif. Residues 129-142 (QATDSHSLAERVRR) are basic motif; degenerate. Positions 129–179 (QATDSHSLAERVRRERISERMRMLQALVPGCDKVTGKALILDEIINYVQSL) constitute a bHLH domain. The segment at 143-179 (ERISERMRMLQALVPGCDKVTGKALILDEIINYVQSL) is helix-loop-helix motif.

The protein belongs to the bHLH protein family. In terms of assembly, homodimer. Interacts with IBH1, BC1 and LO9-177.

It is found in the nucleus. Together with BCL2, positive regulator of cell elongation at least partially through increased gibberellic acid (GA) biosynthesis. The polypeptide is Basic helix-loop-helix protein 80 (Oryza sativa subsp. indica (Rice)).